Reading from the N-terminus, the 241-residue chain is Nickel import ATP-binding protein LarO (241 aa).

The 239-residue stretch at 2-240 (IKLVNICYDY…QPARQAQLMT (239 aa)) folds into the ABC transporter domain. An ATP-binding site is contributed by 34-41 (GPNGSGKS).

Belongs to the ABC transporter superfamily. In terms of assembly, may form an energy-coupling factor (ECF) transporter complex composed of an ATP-binding protein (A component, LarO), a transmembrane protein (T component, LarQ) and a fused possible substrate-capture protein (S component, LarMN) of unknown stoichiometry.

It is found in the cell membrane. Its function is as follows. Probable ATP-binding component of the energy-coupling factor (ECF) transporter complex LarMNQO involved in nickel import. LarO is presumably responsible for energy coupling to the transport system. This Lactiplantibacillus plantarum (strain ATCC BAA-793 / NCIMB 8826 / WCFS1) (Lactobacillus plantarum) protein is Nickel import ATP-binding protein LarO.